The chain runs to 205 residues: Large ribosomal subunit protein bL25 (205 aa).

The tract at residues 180 to 205 (HEEVAEEAEETEGEDAEEAPAAEGEE) is disordered. Over residues 183 to 205 (VAEEAEETEGEDAEEAPAAEGEE) the composition is skewed to acidic residues.

It belongs to the bacterial ribosomal protein bL25 family. CTC subfamily. In terms of assembly, part of the 50S ribosomal subunit; part of the 5S rRNA/L5/L18/L25 subcomplex. Contacts the 5S rRNA. Binds to the 5S rRNA independently of L5 and L18.

Functionally, this is one of the proteins that binds to the 5S RNA in the ribosome where it forms part of the central protuberance. The polypeptide is Large ribosomal subunit protein bL25 (Corynebacterium diphtheriae (strain ATCC 700971 / NCTC 13129 / Biotype gravis)).